Reading from the N-terminus, the 948-residue chain is Putative JmjC domain-containing histone demethylation protein 1 (948 aa).

In terms of domain architecture, JmjC spans 243–402 (VSTTKLAYYV…PQLSIYNLEL (160 aa)). Residue T294 coordinates substrate. Residues H297 and E299 each contribute to the Fe cation site. K314 is a binding site for substrate.

It belongs to the JHDM1 histone demethylase family. The cofactor is Fe(2+).

The protein resides in the nucleus. It catalyses the reaction N(6),N(6)-dimethyl-L-lysyl(36)-[histone H3] + 2 2-oxoglutarate + 2 O2 = L-lysyl(36)-[histone H3] + 2 formaldehyde + 2 succinate + 2 CO2. May be a histone demethylase that specifically demethylates 'Lys-36' of histone H3, thereby playing a central role in histone code. Represses transcriptional silencing by negatively affecting heterochromatin stability. The sequence is that of Putative JmjC domain-containing histone demethylation protein 1 (jhd1) from Schizosaccharomyces pombe (strain 972 / ATCC 24843) (Fission yeast).